The sequence spans 343 residues: Cytoplasmic tRNA 2-thiolation protein 1 (343 aa).

It belongs to the TtcA family. CTU1/NCS6/ATPBD3 subfamily.

Its subcellular location is the cytoplasm. Its pathway is tRNA modification; 5-methoxycarbonylmethyl-2-thiouridine-tRNA biosynthesis. Plays a central role in 2-thiolation of mcm(5)S(2)U at tRNA wobble positions of tRNA(Lys), tRNA(Glu) and tRNA(Gln). Directly binds tRNAs and probably acts by catalyzing adenylation of tRNAs, an intermediate required for 2-thiolation. It is unclear whether it acts as a sulfurtransferase that transfers sulfur from thiocarboxylated URM1 onto the uridine of tRNAs at wobble position. This chain is Cytoplasmic tRNA 2-thiolation protein 1, found in Drosophila willistoni (Fruit fly).